The chain runs to 1217 residues: Endonuclease YhcR (1217 aa).

The signal sequence occupies residues 1 to 46 (MLSVEMISRQNRCHYVYKGGNMMRRILHIVLITALMFLNVMYTFEA). The region spanning 376 to 517 (GEYEGIVDRV…KKDQKGIWNE (142 aa)) is the TNase-like domain. Residues Arg404, Glu412, and Arg460 contribute to the active site. Residues 590–828 (LRILSMNDLH…VIFAAHNHQV (239 aa)) form a phosphoesterase region. Positions 597, 599, 647, 680, 792, and 824 each coordinate a divalent metal cation. A 5'-nucleotidase region spans residues 829 to 1085 (VNGEVNGKLI…AYTKEGRIKL (257 aa)). Substrate contacts are provided by residues Phe965 and 1035 to 1042 (FMATATGA). Residues 1087–1142 (EASDIEDPVTEDPITEEPGDDPGTEDPIKEDPRPGEDLPDIKETPGTAPVHQLPPS) form a disordered region. Positions 1089 to 1110 (SDIEDPVTEDPITEEPGDDPGT) are enriched in acidic residues. Residues 1112-1129 (DPIKEDPRPGEDLPDIKE) show a composition bias toward basic and acidic residues. The LPXTG sorting signal motif lies at 1182–1186 (LPDTS). Position 1185 is a pentaglycyl murein peptidoglycan amidated threonine (Thr1185). Positions 1186 to 1217 (SAGYYNFMVIGAAVTLSGTYLYVRRKRSASRT) are cleaved as a propeptide — removed by sortase.

It in the C-terminal section; belongs to the 5'-nucleotidase family. Requires Ca(2+) as cofactor. The cofactor is Mn(2+).

It localises to the secreted. The protein resides in the cell wall. With respect to regulation, requires a minimum of 0.1 mM of calcium for a significant activity. Maximal activity was observed with concentrations of calcium between 1 to 5 mM. Is 10-fold less active with the corresponding concentrations of manganese. Inhibited by NaCl at concentrations of 100 mM and higher. Functionally, sugar-nonspecific endonuclease that yields nucleotide 3'-monophosphate products. No 5'-nucleotidase activity was detected, using 5'-AMP as the substrate, in the presence of diverse divalent metals and with various pH values. This is Endonuclease YhcR (yhcR) from Bacillus subtilis (strain 168).